We begin with the raw amino-acid sequence, 3142 residues long: Huntingtin (3142 aa).

A sufficient for interaction with TPR region spans residues 3 to 13 (TLEKLMKAFES). Position 9 is an N6-acetyllysine (Lys-9). A disordered region spans residues 14-85 (LKSFQQQQQQ…PGPAVAEEPL (72 aa)). Residues 18–37 (QQQQQQQQQQQQQQQQQQQQ) show a composition bias toward low complexity. Residues 38 to 78 (QPPPPPPPPPPPQLPQPPPQAQPLLPQPQPPPPPPPPPPGP) show a composition bias toward pro residues. An N6-acetyllysine mark is found at Lys-176 and Lys-234. 3 HEAT repeats span residues 204-241 (PYLV…SFGN), 246-283 (NEIK…HSRR), and 316-360 (LTLR…VYEL). Residue Lys-343 is modified to N6-acetyllysine. Ser-411, Ser-417, Ser-419, and Ser-432 each carry phosphoserine. The residue at position 442 (Lys-442) is an N6-acetyllysine. A disordered region spans residues 447–469 (EEEALEDDSESRSDVSSSALTAS). The segment at 491–502 (GHDIITEQPRSQ) is interaction with ZDHHC17. A disordered region spans residues 517–583 (LTSSATDGDE…TPSDSSEIVL (67 aa)). Residues 531–545 (SHSSSQVSAVPSDPA) are compositionally biased toward low complexity. The span at 550–579 (DGTQASSPISDSSQTTTEGPDSAVTPSDSS) shows a compositional bias: polar residues. Residue Gly-551 is the site of N-myristoyl glycine attachment. Residues Ser-640 and Ser-643 each carry the phosphoserine modification. 2 HEAT repeats span residues 802–839 (FSLA…SLCS) and 902–940 (KLQE…KLFY). The disordered stretch occupies residues 1176–1225 (PSLSPIRRKGKEKEPGEQASVPLSPKKGSEASAASRQSDTSGPVTTSKSS). 2 positions are modified to phosphoserine; by CDK5: Ser-1179 and Ser-1199. Over residues 1207–1225 (SAASRQSDTSGPVTTSKSS) the composition is skewed to polar residues. Phosphoserine occurs at positions 1870 and 1874. Positions 2330 to 2351 (ERRTNTPKAISEEEEEVDPNTQ) are disordered. The Nuclear export signal motif lies at 2395 to 2404 (IIISLARLPL). Residues 2633-2662 (EEEWDEEEEEEADAPAPSSPPTSPVNSRKH) form a disordered region. Positions 2634-2645 (EEWDEEEEEEAD) are enriched in acidic residues.

Belongs to the huntingtin family. As to quaternary structure, interacts with PFN1. Interacts through its N-terminus with PRPF40A. Interacts with PQBP1. Interacts with SETD2. Interacts with SH3GLB1. Interacts with SYVN. Interacts with TPR; the interaction is inhibited by forms of Huntingtin with expanded polyglutamine stretch. Interacts with ZDHHC13 (via ANK repeats). Interacts with ZDHHC17 (via ANK repeats). Interacts with F8A1/F8A2/F8A3. Found in a complex with F8A1/F8A2/F8A3, HTT and RAB5A; mediates the recruitment of HTT by RAB5A. Cleaved by caspases downstream of the polyglutamine stretch. The resulting N-terminal fragments are cytotoxic and provokes apoptosis. In terms of processing, forms with expanded polyglutamine expansion are specifically ubiquitinated by SYVN1, which promotes their proteasomal degradation. Post-translationally, phosphorylation at Ser-1179 and Ser-1199 by CDK5 in response to DNA damage in nuclei of neurons protects neurons against polyglutamine expansion as well as DNA damage mediated toxicity. Myristoylated at Gly-551, following proteolytic cleavage at Asp-550. Expressed in the brain cortex (at protein level). Widely expressed with the highest level of expression in the brain (nerve fibers, varicosities, and nerve endings). In the brain, the regions where it can be mainly found are the cerebellar cortex, the neocortex, the striatum, and the hippocampal formation.

Its subcellular location is the cytoplasm. The protein localises to the nucleus. The protein resides in the early endosome. It is found in the cytoplasmic vesicle. It localises to the autophagosome. May play a role in microtubule-mediated transport or vesicle function. Functionally, promotes the formation of autophagic vesicles. The protein is Huntingtin (HTT) of Homo sapiens (Human).